The sequence spans 341 residues: Arfaptin-2 (341 aa).

Residues 46–84 (NETSIVSGGYGGSGDGLIPTGSGRHPSHSTSPSGPGDEV) form a disordered region. Positions 65–81 (TGSGRHPSHSTSPSGPG) are enriched in low complexity. Ser72 bears the Phosphoserine mark. The AH domain maps to 121-321 (TVDLELELQI…NQKQLEQTLQ (201 aa)).

As to quaternary structure, forms homodimers or heterodimers with ARFIP1. Interacts with RAC1. Specifically binds to GTP-bound ARF1 and ARF6, but binds to RAC1.GTP and RAC1.GDP with similar affinities. Interacts with ARL1. Interacts (via N-terminus) with IKBKB and IKBKG; these interactions inhibit activation of NF-kappa-B.

It is found in the golgi apparatus. The protein localises to the trans-Golgi network membrane. In terms of biological role, plays a role in constitutive metalloproteinase (MMP) secretion from the trans Golgi network. May have important functions during vesicle biogenesis at certain cargo subdomains, which could be predominantly utilized by secreted MMPs, such as MMP7 and MMP2. Also involved in autophagy by regulating the starvation-dependent trafficking of ATG9A vesicles which deliver the phosphatidylinositol 4-kinase beta (PI4KB) to the autophagosome initiation site. Involved in phagophore growth during mitophagy by regulating ATG9A trafficking to mitochondria. In addition, plays a role in NF-kappa-B inhibition by interacting with IKBKB and IKBKG. The sequence is that of Arfaptin-2 from Mus musculus (Mouse).